The following is a 308-amino-acid chain: MQEAKVAAILGAGAWGTTLAQLLRSNGLEVRQWSRRSETSLAATLAEADLWIMAVSMAGLASVADQVAALQLGDRAIWVSATKGLADLGWRTPSQVLSDRFPLQPITVLSGPNLSKEISQGLPAATVIASRDRHAAAVVQQAFASDRFRVYTNRDPLGTELGGALKNVIAIAVGVCDGLCLGANARSALVTRALAEILRVGAYFGARTETFFGLSGLGDLLATCTSPLSRNYQVGFRLAQGESLAAALTAIAATAEGVSTARVLAQLASREGLELPIAACVAELLDNRISPTTAIERLMARDLKAELV.

4 residues coordinate NADPH: W15, R35, R36, and K83. The sn-glycerol 3-phosphate site is built by K83 and G111. S115 is a binding site for NADPH. Sn-glycerol 3-phosphate contacts are provided by K166, D219, S229, R230, and N231. The Proton acceptor role is filled by K166. NADPH is bound at residue R230. NADPH is bound at residue E256.

This sequence belongs to the NAD-dependent glycerol-3-phosphate dehydrogenase family.

The protein localises to the cytoplasm. It carries out the reaction sn-glycerol 3-phosphate + NAD(+) = dihydroxyacetone phosphate + NADH + H(+). It catalyses the reaction sn-glycerol 3-phosphate + NADP(+) = dihydroxyacetone phosphate + NADPH + H(+). The protein operates within membrane lipid metabolism; glycerophospholipid metabolism. Functionally, catalyzes the reduction of the glycolytic intermediate dihydroxyacetone phosphate (DHAP) to sn-glycerol 3-phosphate (G3P), the key precursor for phospholipid synthesis. The protein is Glycerol-3-phosphate dehydrogenase [NAD(P)+] of Synechococcus elongatus (strain ATCC 33912 / PCC 7942 / FACHB-805) (Anacystis nidulans R2).